The chain runs to 503 residues: MSTPEATAEAVSGHEPNRAVRARFCPSPTGTPHVGLVRTALYNWVFARHNQGKLVFRIEDTDASRDSEESYQALLDALRWLGLDWDEGPEVGGEYGPYRQSERRDIYADIARRLLEAGELYESFSTPEEVEARHRAAGRDPKLGYDNADRDLTDEQKAAFRAEGRNAVLRLRMPEHDITFADLVRGEITFPAGSVPDPVLVRGNGDALYTLTNPVDDALMRITHVLRGEDLLSSTPRQIALYDALRRIGVTDFTPEFGHLPFVMGEGNKKLSKRDPQSNLFHHRDRGFLPEGLLNYLALLGWSISEDRDVFTLDEMVEAFEIGRVSSNPARFDQKKADAINSAHLRALAPDDFLERVVPYLVSGGVLPAEPTEEQLATVRAAAPLVQERLIVLSDAVGMMRFLFDGDDFAPDPASAEKALGEDARPVLEAAVSALEALPEWTTEAIEAALKESVVDGLGIKPRKAFAPVRVAVTGRTVSPPLYESMELLGREVSLRRLRAPLG.

The short motif at 26-36 (PSPTGTPHVGL) is the 'HIGH' region element. A disordered region spans residues 126-148 (TPEEVEARHRAAGRDPKLGYDNA). The segment covering 130–148 (VEARHRAAGRDPKLGYDNA) has biased composition (basic and acidic residues). A 'KMSKS' region motif is present at residues 270–274 (KLSKR). Lysine 273 serves as a coordination point for ATP.

The protein belongs to the class-I aminoacyl-tRNA synthetase family. Glutamate--tRNA ligase type 1 subfamily. In terms of assembly, monomer.

The protein localises to the cytoplasm. The enzyme catalyses tRNA(Glu) + L-glutamate + ATP = L-glutamyl-tRNA(Glu) + AMP + diphosphate. In terms of biological role, catalyzes the attachment of glutamate to tRNA(Glu) in a two-step reaction: glutamate is first activated by ATP to form Glu-AMP and then transferred to the acceptor end of tRNA(Glu). The protein is Glutamate--tRNA ligase of Saccharopolyspora erythraea (strain ATCC 11635 / DSM 40517 / JCM 4748 / NBRC 13426 / NCIMB 8594 / NRRL 2338).